The primary structure comprises 115 residues: Large ribosomal subunit protein uL24 (115 aa).

Belongs to the universal ribosomal protein uL24 family. In terms of assembly, part of the 50S ribosomal subunit.

Its function is as follows. One of two assembly initiator proteins, it binds directly to the 5'-end of the 23S rRNA, where it nucleates assembly of the 50S subunit. One of the proteins that surrounds the polypeptide exit tunnel on the outside of the subunit. The protein is Large ribosomal subunit protein uL24 of Acaryochloris marina (strain MBIC 11017).